The following is a 646-amino-acid chain: Elongation factor 4 (646 aa).

The 186-residue stretch at 42-227 folds into the tr-type G domain; it reads AQIRNFCIIA…EVVRRVPHPQ (186 aa). Residues 54-59 and 174-177 each bind GTP; these read DHGKST and NKID.

The protein belongs to the TRAFAC class translation factor GTPase superfamily. Classic translation factor GTPase family. LepA subfamily.

The protein localises to the cell membrane. The enzyme catalyses GTP + H2O = GDP + phosphate + H(+). In terms of biological role, required for accurate and efficient protein synthesis under certain stress conditions. May act as a fidelity factor of the translation reaction, by catalyzing a one-codon backward translocation of tRNAs on improperly translocated ribosomes. Back-translocation proceeds from a post-translocation (POST) complex to a pre-translocation (PRE) complex, thus giving elongation factor G a second chance to translocate the tRNAs correctly. Binds to ribosomes in a GTP-dependent manner. This Mycobacterium leprae (strain Br4923) protein is Elongation factor 4.